The chain runs to 171 residues: Protein TIFY 11d (171 aa).

One can recognise a Tify domain in the interval 65–100 (PSAGTAPLTIFYDGRMVVVDDVPAEKAAELMRLAGS). The short motif at 117 to 142 (PIARKASLQRFLQKRKHRITTTSEPY) is the Jas element. The short motif at 119–126 (ARKASLQR) is the Nuclear localization signal element.

This sequence belongs to the TIFY/JAZ family. As to quaternary structure, interacts with BHLH148 and COI1A. Interacts with COI1A, COI1B and COI2 in a coronatine-dependent manner. Coronatine is an analog of jasmonoyl isoleucine (JA-Ile). Post-translationally, ubiquitinated. Increase in jasmonoyl isoleucine (JA-Ile) levels mediates its degradation via COI1A-mediated proteasome pathway.

It is found in the nucleus. Repressor of jasmonate (JA) responses. May act on an initial response of JA-regulated gene expression toward drought tolerance as part of a BHLH148-TIFY11D/JAZ12-COI1A complex. This chain is Protein TIFY 11d, found in Oryza sativa subsp. indica (Rice).